A 148-amino-acid chain; its full sequence is MKRELKVKPIENGTVIDHISGSKALKVYKILNIEEKLPITLALNVPSKKGVTKDILKIEGLELSKDDVNKIALISPDATINIIKEGKVIKKFKVDIPKRIDGIIKCTNPNCITNKENIESRFSIEQKNTLKIRCEYCEKFINSIIISK.

Positions 106, 111, 134, and 137 each coordinate Zn(2+).

It belongs to the PyrI family. As to quaternary structure, contains catalytic and regulatory chains. Zn(2+) is required as a cofactor.

Its function is as follows. Involved in allosteric regulation of aspartate carbamoyltransferase. The sequence is that of Aspartate carbamoyltransferase regulatory chain from Methanococcus maripaludis (strain DSM 14266 / JCM 13030 / NBRC 101832 / S2 / LL).